Here is a 114-residue protein sequence, read N- to C-terminus: uncharacterized protein (114 aa).

The segment at 1–37 (MLKKILSLFKKEEPKTEEKPTEVEEKKEEREEKEEKK) is disordered. A compositionally biased stretch (basic and acidic residues) spans 9-37 (FKKEEPKTEEKPTEVEEKKEEREEKEEKK).

This is an uncharacterized protein from Aquifex aeolicus (strain VF5).